The chain runs to 418 residues: Tyrosine--tRNA ligase (418 aa).

An L-tyrosine-binding site is contributed by Tyr34. Residues 39–48 carry the 'HIGH' region motif; the sequence is PTADSLHLGH. Positions 169 and 173 each coordinate L-tyrosine. Positions 229–233 match the 'KMSKS' region motif; that stretch reads KFGKS. Lys232 contacts ATP. Residues 352–418 enclose the S4 RNA-binding domain; the sequence is NNIVELLVSS…GKKKYFVLTY (67 aa).

Belongs to the class-I aminoacyl-tRNA synthetase family. TyrS type 1 subfamily. Homodimer.

Its subcellular location is the cytoplasm. It carries out the reaction tRNA(Tyr) + L-tyrosine + ATP = L-tyrosyl-tRNA(Tyr) + AMP + diphosphate + H(+). Functionally, catalyzes the attachment of tyrosine to tRNA(Tyr) in a two-step reaction: tyrosine is first activated by ATP to form Tyr-AMP and then transferred to the acceptor end of tRNA(Tyr). This is Tyrosine--tRNA ligase from Streptococcus pneumoniae (strain CGSP14).